A 177-amino-acid chain; its full sequence is Secretion monitor (177 aa).

The signal sequence occupies residues 1-37; sequence MIGILNRWRQFGRRYFWPHLLLGMVAASLGVPLNLSG.

It belongs to the SecM family.

The protein localises to the cytoplasm. It is found in the cytosol. The protein resides in the periplasm. Its function is as follows. Regulates secA expression by translational coupling of the secM secA operon. Translational pausing at a specific Pro residue 5 residues before the end of the protein may allow disruption of a mRNA repressor helix that normally suppresses secA translation initiation. This Yersinia pestis bv. Antiqua (strain Antiqua) protein is Secretion monitor.